The sequence spans 274 residues: Small ribosomal subunit protein uS2 (274 aa).

It belongs to the universal ribosomal protein uS2 family.

This chain is Small ribosomal subunit protein uS2, found in Syntrophobacter fumaroxidans (strain DSM 10017 / MPOB).